Here is a 37-residue protein sequence, read N- to C-terminus: Cytochrome b6-f complex subunit 5 (37 aa).

Residues 5–25 (LLSGIILGLIPITICGLFFTA) form a helical membrane-spanning segment.

This sequence belongs to the PetG family. As to quaternary structure, the 4 large subunits of the cytochrome b6-f complex are cytochrome b6, subunit IV (17 kDa polypeptide, PetD), cytochrome f and the Rieske protein, while the 4 small subunits are PetG, PetL, PetM and PetN. The complex functions as a dimer.

The protein resides in the plastid. It localises to the chloroplast thylakoid membrane. Its function is as follows. Component of the cytochrome b6-f complex, which mediates electron transfer between photosystem II (PSII) and photosystem I (PSI), cyclic electron flow around PSI, and state transitions. PetG is required for either the stability or assembly of the cytochrome b6-f complex. The polypeptide is Cytochrome b6-f complex subunit 5 (Euglena gracilis).